A 202-amino-acid polypeptide reads, in one-letter code: 3-isopropylmalate dehydratase small subunit (202 aa).

The protein belongs to the LeuD family. LeuD type 1 subfamily. As to quaternary structure, heterodimer of LeuC and LeuD.

It carries out the reaction (2R,3S)-3-isopropylmalate = (2S)-2-isopropylmalate. It participates in amino-acid biosynthesis; L-leucine biosynthesis; L-leucine from 3-methyl-2-oxobutanoate: step 2/4. Its function is as follows. Catalyzes the isomerization between 2-isopropylmalate and 3-isopropylmalate, via the formation of 2-isopropylmaleate. The polypeptide is 3-isopropylmalate dehydratase small subunit (Rhizobium etli (strain ATCC 51251 / DSM 11541 / JCM 21823 / NBRC 15573 / CFN 42)).